Here is a 278-residue protein sequence, read N- to C-terminus: 4-hydroxy-3-methylbut-2-enyl diphosphate reductase (278 aa).

[4Fe-4S] cluster is bound at residue C12. Positions 41 and 74 each coordinate (2E)-4-hydroxy-3-methylbut-2-enyl diphosphate. Positions 41 and 74 each coordinate dimethylallyl diphosphate. The isopentenyl diphosphate site is built by H41 and H74. C96 lines the [4Fe-4S] cluster pocket. H124 lines the (2E)-4-hydroxy-3-methylbut-2-enyl diphosphate pocket. Position 124 (H124) interacts with dimethylallyl diphosphate. Position 124 (H124) interacts with isopentenyl diphosphate. E126 (proton donor) is an active-site residue. T161 serves as a coordination point for (2E)-4-hydroxy-3-methylbut-2-enyl diphosphate. C189 contacts [4Fe-4S] cluster. S217, N219, and S261 together coordinate (2E)-4-hydroxy-3-methylbut-2-enyl diphosphate. Residues S217, N219, and S261 each coordinate dimethylallyl diphosphate. The isopentenyl diphosphate site is built by S217, N219, and S261.

Belongs to the IspH family. Requires [4Fe-4S] cluster as cofactor.

It carries out the reaction isopentenyl diphosphate + 2 oxidized [2Fe-2S]-[ferredoxin] + H2O = (2E)-4-hydroxy-3-methylbut-2-enyl diphosphate + 2 reduced [2Fe-2S]-[ferredoxin] + 2 H(+). The catalysed reaction is dimethylallyl diphosphate + 2 oxidized [2Fe-2S]-[ferredoxin] + H2O = (2E)-4-hydroxy-3-methylbut-2-enyl diphosphate + 2 reduced [2Fe-2S]-[ferredoxin] + 2 H(+). It functions in the pathway isoprenoid biosynthesis; dimethylallyl diphosphate biosynthesis; dimethylallyl diphosphate from (2E)-4-hydroxy-3-methylbutenyl diphosphate: step 1/1. Its pathway is isoprenoid biosynthesis; isopentenyl diphosphate biosynthesis via DXP pathway; isopentenyl diphosphate from 1-deoxy-D-xylulose 5-phosphate: step 6/6. In terms of biological role, catalyzes the conversion of 1-hydroxy-2-methyl-2-(E)-butenyl 4-diphosphate (HMBPP) into a mixture of isopentenyl diphosphate (IPP) and dimethylallyl diphosphate (DMAPP). Acts in the terminal step of the DOXP/MEP pathway for isoprenoid precursor biosynthesis. This is 4-hydroxy-3-methylbut-2-enyl diphosphate reductase from Anaeromyxobacter sp. (strain K).